Reading from the N-terminus, the 486-residue chain is Cardiolipin synthase A (486 aa).

Helical transmembrane passes span 3–23 (TVYT…IAGV) and 38–58 (MAWL…YLAV). 2 PLD phosphodiesterase domains span residues 219 to 246 (MDLR…VDPR) and 399 to 426 (EGGL…DMRS). Residues H224, K226, D231, H404, K406, and D411 contribute to the active site.

Belongs to the phospholipase D family. Cardiolipin synthase subfamily. ClsA sub-subfamily.

The protein resides in the cell inner membrane. The enzyme catalyses 2 a 1,2-diacyl-sn-glycero-3-phospho-(1'-sn-glycerol) = a cardiolipin + glycerol. Catalyzes the reversible phosphatidyl group transfer from one phosphatidylglycerol molecule to another to form cardiolipin (CL) (diphosphatidylglycerol) and glycerol. This chain is Cardiolipin synthase A, found in Escherichia coli O157:H7 (strain EC4115 / EHEC).